The following is a 336-amino-acid chain: D-alanine--D-alanine ligase (336 aa).

An ATP-grasp domain is found at 124–330; it reads KMWFSALGIP…FTEYLSLVIN (207 aa). 154–209 contributes to the ATP binding site; the sequence is ALENWGSIFVKAASQGSSVGCYKVDDSSKVAGVLKDAFGYAPYVIVEKTIKARELE. Residues Asp284, Glu297, and Asn299 each coordinate Mg(2+).

This sequence belongs to the D-alanine--D-alanine ligase family. Mg(2+) serves as cofactor. Mn(2+) is required as a cofactor.

It is found in the cytoplasm. The enzyme catalyses 2 D-alanine + ATP = D-alanyl-D-alanine + ADP + phosphate + H(+). Its pathway is cell wall biogenesis; peptidoglycan biosynthesis. In terms of biological role, cell wall formation. This chain is D-alanine--D-alanine ligase, found in Shewanella sp. (strain MR-4).